The primary structure comprises 1183 residues: RecQ-like DNA helicase BLM (1183 aa).

The tract at residues 1–109 is disordered; that stretch reads MEEARAATNG…AAEQDSSAEH (109 aa). Over residues 14–27 the composition is skewed to polar residues; that stretch reads ESQKLSNGEKSSQL. Positions 38 to 48 are enriched in acidic residues; sequence ADIELEEDDYL. The necessary for dimerization and homooligomerization stretch occupies residues 110-162; that stretch reads ADKGLHLEQQLYSVMEDICKLVDAIPLHELTSISCAKELLQQRELRRKLLADS. Disordered regions lie at residues 164 to 215, 260 to 323, and 381 to 408; these read ALNT…LPSV, PKVN…GCWD, and GSAP…PLVH. 2 stretches are compositionally biased toward polar residues: residues 206 to 215 and 265 to 280; these read TPKSTNLPSV and KGST…SFNG. Residues 439-443 and 463-467 each bind ATP; these read FRTNQ and GGGKS. The 176-residue stretch at 447–622 folds into the Helicase ATP-binding domain; the sequence is INAALLGEDC…QNQLEMLKPQ (176 aa). Positions 566–569 match the DEAH box motif; the sequence is DEAH. 2 3' overhang DNA-binding regions span residues 641 to 644 and 668 to 670; these read KPKK and SRH. One can recognise a Helicase C-terminal domain in the interval 648 to 795; sequence DCLEWIKKYH…TRQTHFNNLY (148 aa). An ATP-binding site is contributed by arginine 753. The interval 771 to 774 is 3' overhang DNA-binding; it reads RLRR. 4 residues coordinate Zn(2+): cysteine 807, cysteine 826, cysteine 834, and cysteine 837. The interval 865-910 is DNA Holliday junction binding; sequence QVGGINGNRNTGSGRYTLNMMVDIFLGAKSAKIQSGIFGKGAAYSR. 3 3' overhang DNA-binding regions span residues 881–883, 892–896, and 931–937; these read TLN, AKSAK, and YITANDQ. An HRDC domain is found at 983-1063; that stretch reads EEMVKKCLGE…DKYSEWTTPE (81 aa). Residues 998 to 1015 are necessary for ssDNA and DNA Holliday junction binding; that stretch reads KTLGKIFDVHYFNIFSTS. The segment at 1068 to 1183 is disordered; the sequence is QSVDTAPGSA…HFLQPSYAVL (116 aa). Residues 1091-1101 are compositionally biased toward polar residues; it reads VTSSYFGGNAN. The Nuclear localization signal motif lies at 1104-1120; sequence RKRKRLPNSGESKRKKT. Residues 1133 to 1142 show a composition bias toward basic residues; that stretch reads ARYRRARRAP. Low complexity predominate over residues 1143–1158; it reads GSRAAAPAQSSALRGA.

The protein belongs to the helicase family. RecQ subfamily. As to quaternary structure, monomer. Homodimer (via N-terminus). Homotetramer (via N-terminus); dimer of dimers. Homohexamer (via N-terminus). Self-association negatively regulates DNA unwinding amplitude and rate. Oligomer complexes dissociate into monomer in presence of ATP. Requires Zn(2+) as cofactor.

The protein resides in the nucleus. The catalysed reaction is Couples ATP hydrolysis with the unwinding of duplex DNA by translocating in the 3'-5' direction.. It carries out the reaction ATP + H2O = ADP + phosphate + H(+). Functionally, ATP-dependent DNA helicase that unwinds single- and double-stranded DNA in a 3'-5' direction. Participates in DNA replication and repair. Involved in 5'-end resection of DNA during double-strand break (DSB) repair. Negatively regulates sister chromatid exchange (SCE). Stimulates DNA 4-way junction branch migration and DNA Holliday junction dissolution. Binds DNA. Binds single-stranded DNA (ssDNA), forked duplex DNA and DNA Holliday junction. The chain is RecQ-like DNA helicase BLM (BLM) from Gallus gallus (Chicken).